Reading from the N-terminus, the 991-residue chain is Integrator complex subunit 8 (991 aa).

Over residues 1-10 (MSAEAADREA) the composition is skewed to basic and acidic residues. A disordered region spans residues 1 to 22 (MSAEAADREAATSSRPCTPPQT). Polar residues predominate over residues 11-22 (ATSSRPCTPPQT). A WFEF motif motif is present at residues 24–29 (WFEFLL). TPR repeat units follow at residues 250–288 (CQGCYDLGAVYFLQGPTNPSCYEKARDHFFRTKQLVSKI), 319–355 (SQPATPYSQIHNFMKTNNYQGILKIFLEDHLNNSLPD), 569–602 (VYILLAKGLHCSAIKDYPRAKQLLSACLELVTEF), and 829–862 (HSWLTIQADIYFATNEYSAALNYYLQAGAVCSDF).

Belongs to the Integrator subunit 8 family. Component of the Integrator complex, composed of core subunits INTS1, INTS2, INTS3, INTS4, INTS5, INTS6, INTS7, INTS8, INTS9/RC74, INTS10, INTS11/CPSF3L, INTS12, INTS13, INTS14 and INTS15. The core complex associates with protein phosphatase 2A subunits PPP2CA and PPP2R1A, to form the Integrator-PP2A (INTAC) complex.

The protein resides in the nucleus. It is found in the chromosome. Functionally, component of the integrator complex, a multiprotein complex that terminates RNA polymerase II (Pol II) transcription in the promoter-proximal region of genes. The integrator complex provides a quality checkpoint during transcription elongation by driving premature transcription termination of transcripts that are unfavorably configured for transcriptional elongation: the complex terminates transcription by (1) catalyzing dephosphorylation of the C-terminal domain (CTD) of Pol II subunit POLR2A/RPB1 and SUPT5H/SPT5, (2) degrading the exiting nascent RNA transcript via endonuclease activity and (3) promoting the release of Pol II from bound DNA. The integrator complex is also involved in terminating the synthesis of non-coding Pol II transcripts, such as enhancer RNAs (eRNAs), small nuclear RNAs (snRNAs), telomerase RNAs and long non-coding RNAs (lncRNAs). Within the integrator complex, INTS8 is required for the recruitment of protein phosphatase 2A (PP2A) to transcription pause-release checkpoint. The polypeptide is Integrator complex subunit 8 (ints8) (Xenopus laevis (African clawed frog)).